We begin with the raw amino-acid sequence, 187 residues long: Ribosome-recycling factor (187 aa).

Belongs to the RRF family.

It is found in the cytoplasm. Responsible for the release of ribosomes from messenger RNA at the termination of protein biosynthesis. May increase the efficiency of translation by recycling ribosomes from one round of translation to another. This chain is Ribosome-recycling factor, found in Methylobacterium radiotolerans (strain ATCC 27329 / DSM 1819 / JCM 2831 / NBRC 15690 / NCIMB 10815 / 0-1).